The sequence spans 447 residues: Tubulin beta-2 chain (447 aa).

Residues Gln-9, Glu-67, Ser-136, Gly-140, Thr-141, Gly-142, Asn-202, and Asn-224 each coordinate GTP. A Mg(2+)-binding site is contributed by Glu-67. Positions 411 to 425 (SNMNDLVSEYQQYQD) are enriched in polar residues. A disordered region spans residues 411–447 (SNMNDLVSEYQQYQDATAEEDEYEEEEEDYHQEHDEM). Over residues 427–440 (TAEEDEYEEEEEDY) the composition is skewed to acidic residues.

The protein belongs to the tubulin family. As to quaternary structure, dimer of alpha and beta chains. A typical microtubule is a hollow water-filled tube with an outer diameter of 25 nm and an inner diameter of 15 nM. Alpha-beta heterodimers associate head-to-tail to form protofilaments running lengthwise along the microtubule wall with the beta-tubulin subunit facing the microtubule plus end conferring a structural polarity. Microtubules usually have 13 protofilaments but different protofilament numbers can be found in some organisms and specialized cells. The cofactor is Mg(2+).

The protein resides in the cytoplasm. It is found in the cytoskeleton. Tubulin is the major constituent of microtubules, a cylinder consisting of laterally associated linear protofilaments composed of alpha- and beta-tubulin heterodimers. Microtubules grow by the addition of GTP-tubulin dimers to the microtubule end, where a stabilizing cap forms. Below the cap, tubulin dimers are in GDP-bound state, owing to GTPase activity of alpha-tubulin. The protein is Tubulin beta-2 chain (TUBB2) of Pisum sativum (Garden pea).